Here is a 174-residue protein sequence, read N- to C-terminus: Rubredoxin-2 (174 aa).

Positions 1–53 (MAKYQCPDCEYIYDEVAGHPHEGFPPGTSWETIPEEWACPDCAVRDKADFVVI) constitute a Rubredoxin-like 1 domain. Cys-6, Cys-9, Cys-39, and Cys-42 together coordinate Fe cation. The segment covering 56–65 (GSASPASGAA) has biased composition (low complexity). The disordered stretch occupies residues 56–115 (GSASPASGAATPEVRTATTPPKAEASPQKSTGASTPSANNKAKAKAKAKPARAKSSKDST). Over residues 97-109 (AKAKAKAKPARAK) the composition is skewed to basic residues. The region spanning 121 to 172 (FRKWICITCGHIYDEALGDETEGFAPGTLFEDIPDDWCCPDCGATKEDYVLH) is the Rubredoxin-like 2 domain. Fe cation-binding residues include Cys-126, Cys-129, Cys-159, and Cys-162.

This sequence belongs to the rubredoxin family. It depends on Fe(3+) as a cofactor.

It is found in the cytoplasm. Its pathway is hydrocarbon metabolism; alkane degradation. Functionally, involved in the hydrocarbon hydroxylating system, which transfers electrons from NADH to rubredoxin reductase and then through rubredoxin to alkane 1 monooxygenase. The polypeptide is Rubredoxin-2 (alkG) (Alcanivorax borkumensis (strain ATCC 700651 / DSM 11573 / NCIMB 13689 / SK2)).